The sequence spans 435 residues: Centrosomal protein of 55 kDa (435 aa).

Disordered stretches follow at residues 1–63, 213–239, and 268–287; these read MAAK…TDKA, HKEA…KVSR, and ERRR…ALLQ. Coiled-coil stretches lie at residues 18-140 and 185-373; these read SSSS…KNKY and EAYV…RESR. 2 stretches are compositionally biased toward basic and acidic residues: residues 26–49 and 213–222; these read AELE…DMKR and HKEAKSDDQS.

Its subcellular location is the cytoplasm. It localises to the cytoskeleton. It is found in the microtubule organizing center. The protein resides in the centrosome. The protein localises to the centriole. Its subcellular location is the cleavage furrow. It localises to the midbody. It is found in the midbody ring. Its function is as follows. Plays a role in mitotic exit and cytokinesis. Recruits PDCD6IP and TSG101 to midbody during cytokinesis. Required for successful completion of cytokinesis. Not required for microtubule nucleation. Plays a role in the development of the brain and kidney. This Danio rerio (Zebrafish) protein is Centrosomal protein of 55 kDa.